The chain runs to 254 residues: Alcohol dehydrogenase 2 (254 aa).

10-33 contributes to the NAD(+) binding site; sequence FVAGLGGIGFDTSREIVKRGPKNL. Ser-138 is a substrate binding site. Tyr-151 functions as the Proton acceptor in the catalytic mechanism.

The protein belongs to the short-chain dehydrogenases/reductases (SDR) family. Homodimer.

It carries out the reaction a primary alcohol + NAD(+) = an aldehyde + NADH + H(+). The catalysed reaction is a secondary alcohol + NAD(+) = a ketone + NADH + H(+). This chain is Alcohol dehydrogenase 2 (Adh2), found in Drosophila mojavensis (Fruit fly).